The sequence spans 444 residues: ATP-dependent protease ATPase subunit HslU (444 aa).

Residues Ile18 and 60–65 (GVGKTE) contribute to the ATP site. Residues 143 to 163 (WGEVESHDSHSSTRQAFRKKL) are disordered. The ATP site is built by Asp257, Glu322, and Arg394.

This sequence belongs to the ClpX chaperone family. HslU subfamily. As to quaternary structure, a double ring-shaped homohexamer of HslV is capped on each side by a ring-shaped HslU homohexamer. The assembly of the HslU/HslV complex is dependent on binding of ATP.

The protein resides in the cytoplasm. In terms of biological role, ATPase subunit of a proteasome-like degradation complex; this subunit has chaperone activity. The binding of ATP and its subsequent hydrolysis by HslU are essential for unfolding of protein substrates subsequently hydrolyzed by HslV. HslU recognizes the N-terminal part of its protein substrates and unfolds these before they are guided to HslV for hydrolysis. This is ATP-dependent protease ATPase subunit HslU from Haemophilus influenzae (strain PittEE).